Consider the following 341-residue polypeptide: Inactive caspase-12 (341 aa).

A CARD domain is found at 1–92; that stretch reads MADEKPSNGV…QLSSDISSDG (92 aa). A phosphoserine mark is found at serine 85 and serine 90. Residues histidine 172 and cysteine 220 contribute to the active site.

It belongs to the peptidase C14A family. As to expression, widely expressed, with highest levels in lung.

Functionally, may function as a negative regulator of inflammatory responses and innate immunity. May reduce cytokine release in response to bacterial lipopolysaccharide during infection. Reduces activation of NF-kappa-B in response to TNF. May lack protease activity. In Homo sapiens (Human), this protein is Inactive caspase-12 (CASP12).